An 81-amino-acid polypeptide reads, in one-letter code: Large ribosomal subunit protein bL31 (81 aa).

Cys-16, Cys-18, Cys-38, and Cys-41 together coordinate Zn(2+).

This sequence belongs to the bacterial ribosomal protein bL31 family. Type A subfamily. Part of the 50S ribosomal subunit. The cofactor is Zn(2+).

Its function is as follows. Binds the 23S rRNA. This Mycobacterium marinum (strain ATCC BAA-535 / M) protein is Large ribosomal subunit protein bL31.